Consider the following 733-residue polypeptide: MEPEIYRRMGLTDAEFEKVKAILGREPNYVELGMFAVMWSEHCGYKSSRSVLKLFPTKAPWVLQGPGENAGIVDIGDGQAVVFKIESHNHPSAIEPFQGAATGVGGIVRDIFAMGARPIAVLNSLRFGPLDDSRTRYLMGGVVGGIAFYGNCLGLPTVAGEVYFEPSYACNPLVNVMAVGLIEQKNIRRGTAAGVGNAVMLIGARTGRDGIHGATFASEELSEASEERRPSVQVGDPFREKLLIEACLEIINEDLIIGMQDMGAAGITSSSCEMAARAGTGMEIDIALVPRREEGMTPYEVMLSESQERMLLVPKKGAEERIRAICRRWGLEAVIIGRVTGDGLMRIMENGRVVAEVPAKALTDQCPVYERERRRPAYLDEVRQRDLSRLPEPEDYGRVLLGLLAAPNLASKEWVYRQYDYMVRTDTVAGPGGDAAILRVKGTSKGLALTVDGNGRYCYLDPERGGAIAVAEAARNLACVGARPLAITDCLNFGNPEKPEVAWQFYQAVSGMSRACEVLRTPVTGGNVSFYNETESGAIYPTPVVGMVGLLPDIEKRCGIGFRREGDLLILMGETYPEIGGSEYLATFHGLVAGEPPALDLEREKAVQALVREVIAAGLATAAHDCAEGGLAVALAESALAGGLGAEVELASDLRPDFLLFSESQSRILLAVAPEARDRVLDLAREKGVRASVIGRCGGHSLVVRINGRTLFNLSLEEMGKQWRESIPVLMAR.

Histidine 42 is an active-site residue. The ATP site is built by tyrosine 45 and lysine 84. Glutamate 86 contacts Mg(2+). Residues 87–90 (SHNH) and arginine 109 contribute to the substrate site. Histidine 88 serves as the catalytic Proton acceptor. Position 110 (aspartate 110) interacts with Mg(2+). Glutamine 233 contributes to the substrate binding site. Aspartate 261 provides a ligand contact to Mg(2+). 305–307 (ESQ) contacts substrate. The ATP site is built by aspartate 489 and glycine 526. Asparagine 527 is a Mg(2+) binding site. A substrate-binding site is contributed by serine 529.

The protein belongs to the FGAMS family. In terms of assembly, monomer. Part of the FGAM synthase complex composed of 1 PurL, 1 PurQ and 2 PurS subunits.

It localises to the cytoplasm. It carries out the reaction N(2)-formyl-N(1)-(5-phospho-beta-D-ribosyl)glycinamide + L-glutamine + ATP + H2O = 2-formamido-N(1)-(5-O-phospho-beta-D-ribosyl)acetamidine + L-glutamate + ADP + phosphate + H(+). The protein operates within purine metabolism; IMP biosynthesis via de novo pathway; 5-amino-1-(5-phospho-D-ribosyl)imidazole from N(2)-formyl-N(1)-(5-phospho-D-ribosyl)glycinamide: step 1/2. Its function is as follows. Part of the phosphoribosylformylglycinamidine synthase complex involved in the purines biosynthetic pathway. Catalyzes the ATP-dependent conversion of formylglycinamide ribonucleotide (FGAR) and glutamine to yield formylglycinamidine ribonucleotide (FGAM) and glutamate. The FGAM synthase complex is composed of three subunits. PurQ produces an ammonia molecule by converting glutamine to glutamate. PurL transfers the ammonia molecule to FGAR to form FGAM in an ATP-dependent manner. PurS interacts with PurQ and PurL and is thought to assist in the transfer of the ammonia molecule from PurQ to PurL. In Moorella thermoacetica (strain ATCC 39073 / JCM 9320), this protein is Phosphoribosylformylglycinamidine synthase subunit PurL.